A 102-amino-acid chain; its full sequence is Small ribosomal subunit protein uS10 (102 aa).

This sequence belongs to the universal ribosomal protein uS10 family. As to quaternary structure, part of the 30S ribosomal subunit.

Its function is as follows. Involved in the binding of tRNA to the ribosomes. The protein is Small ribosomal subunit protein uS10 of Lacticaseibacillus casei (strain BL23) (Lactobacillus casei).